The primary structure comprises 91 residues: Probable translocation protein y4yM (91 aa).

A run of 2 helical transmembrane segments spans residues 15–35 (VVFM…GLTI) and 55–75 (LLVV…PLIE).

The protein belongs to the FliQ/MopD/SpaQ family.

The protein resides in the cell membrane. Could be involved in the secretion of an unknown factor. In Sinorhizobium fredii (strain NBRC 101917 / NGR234), this protein is Probable translocation protein y4yM.